A 286-amino-acid polypeptide reads, in one-letter code: Thymidylate synthase (286 aa).

R21 lines the dUMP pocket. Residue N51 participates in (6R)-5,10-methylene-5,6,7,8-tetrahydrofolate binding. Position 150-151 (150-151) interacts with dUMP; it reads RR. C170 (nucleophile) is an active-site residue. DUMP contacts are provided by residues 190–193, N201, and 231–233; these read RSAD and HIY. Residue D193 coordinates (6R)-5,10-methylene-5,6,7,8-tetrahydrofolate. A285 serves as a coordination point for (6R)-5,10-methylene-5,6,7,8-tetrahydrofolate.

The protein belongs to the thymidylate synthase family. Bacterial-type ThyA subfamily. Homodimer.

The protein localises to the cytoplasm. The catalysed reaction is dUMP + (6R)-5,10-methylene-5,6,7,8-tetrahydrofolate = 7,8-dihydrofolate + dTMP. It participates in pyrimidine metabolism; dTTP biosynthesis. In terms of biological role, catalyzes the reductive methylation of 2'-deoxyuridine-5'-monophosphate (dUMP) to 2'-deoxythymidine-5'-monophosphate (dTMP) while utilizing 5,10-methylenetetrahydrofolate (mTHF) as the methyl donor and reductant in the reaction, yielding dihydrofolate (DHF) as a by-product. This enzymatic reaction provides an intracellular de novo source of dTMP, an essential precursor for DNA biosynthesis. The protein is Thymidylate synthase of Mycoplasmopsis pulmonis (strain UAB CTIP) (Mycoplasma pulmonis).